We begin with the raw amino-acid sequence, 512 residues long: MKEYQIHLELDRSQQNNFLYPLLFREYIYALAHDHGLNRSTIPLENGGYDNKSSSLSVKRLISRTYQRIHLSIYAKDSNPNQFIGHNNKFYSQMISEGFSVIVEIPFSLRLVAFLEGKEMAKSQNFQSIHSIFPFFENNFSHLHYVLDVLIPYPIRPEILVRTFRYWVKDASSLHLLRFFLHEYFNWNSLITPKKSNSIFSTRNPRFFLFLYNSHVYEYESIFFFLRNQSSHLRSTSSGLLFERISFYGKVEDLVQVFVNDFQDNLWLFKHPIMHYVRYQGKSVLASKDMPLLMNKWKYYLVNLWQWHFHVWSQPGRIHINHLYKDYIDFLGYLSRGRLNTLVVRSQMLENAFLIDNAMKQFETTVPIIPLIGSLTTARFCNSLGHPISKPTWADSSDSYIIDRFMRICRNLSHYHSGSSKKKSLYRIKYILRVSCVKSLVRKHKSTVRVFLKRLGSEFLEEFFTEEEHVLSLIFPRALFTSRRLYRGRVWYLDIICINDLVNHDKLEIVPN.

Belongs to the intron maturase 2 family. MatK subfamily.

It localises to the plastid. The protein localises to the chloroplast. Functionally, usually encoded in the trnK tRNA gene intron. Probably assists in splicing its own and other chloroplast group II introns. This is Maturase K from Acer campestre (Field maple).